The chain runs to 163 residues: MKEGVAIYPGTFDPFTRGHEDLVRRASLLFNKVVVAVAESHGKAPIFTLAERVEIARDVLAPFPNVEVTGFDGLLMDFLRQRDARLILRGLRAVSDFEYEFQMAGMNRKLFPDVETVFLTPAEEYMFISATMVREIARLGGDVSKFVQPAVNERLLQKVSLKR.

Position 11 (Thr11) interacts with substrate. ATP-binding positions include 11–12 (TF) and His19. Residues Lys43, Leu75, and Arg89 each contribute to the substrate site. ATP-binding positions include 90-92 (GLR), Glu100, and 125-131 (YMFISAT).

This sequence belongs to the bacterial CoaD family. Homohexamer. Mg(2+) serves as cofactor.

It localises to the cytoplasm. The enzyme catalyses (R)-4'-phosphopantetheine + ATP + H(+) = 3'-dephospho-CoA + diphosphate. It functions in the pathway cofactor biosynthesis; coenzyme A biosynthesis; CoA from (R)-pantothenate: step 4/5. Reversibly transfers an adenylyl group from ATP to 4'-phosphopantetheine, yielding dephospho-CoA (dPCoA) and pyrophosphate. This is Phosphopantetheine adenylyltransferase from Aromatoleum aromaticum (strain DSM 19018 / LMG 30748 / EbN1) (Azoarcus sp. (strain EbN1)).